Reading from the N-terminus, the 109-residue chain is B melanoma antigen 2 (109 aa).

The first 17 residues, 1 to 17 (MAAGVVFLALSAQLLQA), serve as a signal peptide directing secretion.

This sequence belongs to the BAGE family. In terms of tissue distribution, not expressed in normal tissues except in testis. Expressed in 22% of melanomas, in bladder and lung carcinomas.

The protein resides in the secreted. Functionally, unknown. Candidate gene encoding tumor antigens. The sequence is that of B melanoma antigen 2 (BAGE2) from Homo sapiens (Human).